The primary structure comprises 239 residues: Small ribosomal subunit protein uS2 (239 aa).

This sequence belongs to the universal ribosomal protein uS2 family.

This chain is Small ribosomal subunit protein uS2, found in Francisella tularensis subsp. tularensis (strain FSC 198).